A 379-amino-acid polypeptide reads, in one-letter code: Probable protein phosphatase 2C 46 (379 aa).

The signal sequence occupies residues 1 to 20; it reads MLSTLMKLLSACLWPSSSSG. One can recognise a PPM-type phosphatase domain in the interval 42 to 353; that stretch reads LVGEFSMAVV…DDITVVIIFL (312 aa). Position 73 is a phosphoserine (S73). Mn(2+) contacts are provided by D84, G85, D285, and D344.

The protein belongs to the PP2C family. In terms of assembly, interacts with SAUR19. The cofactor is Mg(2+). It depends on Mn(2+) as a cofactor.

It catalyses the reaction O-phospho-L-seryl-[protein] + H2O = L-seryl-[protein] + phosphate. It carries out the reaction O-phospho-L-threonyl-[protein] + H2O = L-threonyl-[protein] + phosphate. May dephosphorylate and repress plasma membrane H(+)-ATPases (PM H(+)-ATPases, e.g. AHA1 and AHA2), thus influencing negatively plant growth and fitness. This is Probable protein phosphatase 2C 46 from Arabidopsis thaliana (Mouse-ear cress).